Consider the following 446-residue polypeptide: uncharacterized protein (446 aa).

Disordered stretches follow at residues Lys63 to Arg95 and Ala155 to Lys232. Positions Glu156–Asn169 are enriched in polar residues. Composition is skewed to basic and acidic residues over residues Asp182 to Ala199 and Ile213 to Lys227.

This is an uncharacterized protein from Mus musculus (Mouse).